The chain runs to 320 residues: Cytochrome f (320 aa).

The first 35 residues, 1–35 (MQTRNTFFWIKEQMTRSISVSIIVYVITQTSISNA), serve as a signal peptide directing secretion. Residues tyrosine 36, cysteine 56, cysteine 59, and histidine 60 each coordinate heme. A helical transmembrane segment spans residues 286 to 306 (VQGLLFFFASVILAQIFLVLK).

This sequence belongs to the cytochrome f family. As to quaternary structure, the 4 large subunits of the cytochrome b6-f complex are cytochrome b6, subunit IV (17 kDa polypeptide, petD), cytochrome f and the Rieske protein, while the 4 small subunits are PetG, PetL, PetM and PetN. The complex functions as a dimer. The cofactor is heme.

The protein resides in the plastid. It is found in the chloroplast thylakoid membrane. Its function is as follows. Component of the cytochrome b6-f complex, which mediates electron transfer between photosystem II (PSII) and photosystem I (PSI), cyclic electron flow around PSI, and state transitions. This is Cytochrome f from Buxus microphylla (Littleleaf boxwood).